A 163-amino-acid polypeptide reads, in one-letter code: Nucleotide-binding protein AM1_1863 (163 aa).

This sequence belongs to the YajQ family.

In terms of biological role, nucleotide-binding protein. The polypeptide is Nucleotide-binding protein AM1_1863 (Acaryochloris marina (strain MBIC 11017)).